The primary structure comprises 258 residues: Methanol--corrinoid protein (258 aa).

The 95-residue stretch at 30–124 (AEELYPKDEL…NSGATPKTKG (95 aa)) folds into the B12-binding N-terminal domain. The region spanning 123 to 248 (KGTVVCHVAE…DAIIAGTTDV (126 aa)) is the B12-binding domain. Histidine 136 provides a ligand contact to methylcob(III)alamin.

It belongs to the methylamine corrinoid protein family. As to quaternary structure, heterotetramer, composed of 2 MtaB and 2 MtaC subunits.

In terms of biological role, harbors a corrinoid prosthetic group and acts as a methyl group carrier in methanogenesis in the methanol pathway. The methyl group of methanol is first transferred to the corrinoid prosthetic group of MtaC in the cob(I)amide oxidation state. This reaction is mediated by MtaB. The methyl group from MtaC is then transferred to coenzyme M by MtaA. This is Methanol--corrinoid protein (mtaC) from Methanosarcina barkeri (strain Fusaro / DSM 804).